The following is a 517-amino-acid chain: Retrotransposon-like protein 1 (517 aa).

2 disordered regions span residues 1 to 29 and 142 to 161; these read MEVN…QQQL and EEER…DARS.

The protein is Retrotransposon-like protein 1 (retr-1) of Caenorhabditis elegans.